We begin with the raw amino-acid sequence, 276 residues long: MSIDSLPPLREVIERHDLMPKKSLGQNFLFDLNLTSKIARQAGDLRDQPVIEVGPGPGGLTRALLAQGAYVTAIERDDRCLEALAEIAAHYPGRLRIIAGDALEQDFTALFPEGPKPRIVANLPYNVGTQLLLNWLLVEPWPPFYSSMTLMFQREVAERIVAKPDSDHYGRLGVLAGWRTQAKIAFDVPPQAFTPPPKVMSSVVHIVPRETPLPCRAEALGQITQAAFGQRRKMLRQSLKSIGGAALLEKTGIDGTRRAETLSVEEFVALANACLP.

The S-adenosyl-L-methionine site is built by N27, L29, G54, E75, D101, and N122.

It belongs to the class I-like SAM-binding methyltransferase superfamily. rRNA adenine N(6)-methyltransferase family. RsmA subfamily.

It localises to the cytoplasm. It carries out the reaction adenosine(1518)/adenosine(1519) in 16S rRNA + 4 S-adenosyl-L-methionine = N(6)-dimethyladenosine(1518)/N(6)-dimethyladenosine(1519) in 16S rRNA + 4 S-adenosyl-L-homocysteine + 4 H(+). In terms of biological role, specifically dimethylates two adjacent adenosines (A1518 and A1519) in the loop of a conserved hairpin near the 3'-end of 16S rRNA in the 30S particle. May play a critical role in biogenesis of 30S subunits. The chain is Ribosomal RNA small subunit methyltransferase A from Brucella abortus (strain S19).